The primary structure comprises 511 residues: Aldehyde dehydrogenase X, mitochondrial (511 aa).

The N-terminal 11 residues, 1-11, are a transit peptide targeting the mitochondrion; sequence PRLFALHHSAT. N6-acetyllysine is present on Lys45. Position 46 is an N6-acetyllysine; alternate (Lys46). Lys46 is modified (N6-succinyllysine; alternate). At Lys75 the chain carries N6-succinyllysine. Residue 256-261 participates in NAD(+) binding; that stretch reads GSTKVG. Catalysis depends on Glu279, which acts as the Proton acceptor. The active-site Nucleophile is Cys313. N6-acetyllysine; alternate occurs at positions 377, 393, and 420. Lys377, Lys393, and Lys420 each carry N6-succinyllysine; alternate. Lys423 is modified (N6-acetyllysine).

It belongs to the aldehyde dehydrogenase family. As to quaternary structure, homotetramer.

The protein localises to the mitochondrion matrix. It catalyses the reaction an aldehyde + NAD(+) + H2O = a carboxylate + NADH + 2 H(+). Its pathway is alcohol metabolism; ethanol degradation; acetate from ethanol: step 2/2. Its function is as follows. ALDHs play a major role in the detoxification of alcohol-derived acetaldehyde. They are involved in the metabolism of corticosteroids, biogenic amines, neurotransmitters, and lipid peroxidation. In the cornea, this enzyme may help in the absorption of the damaging UV-B, as well as in the detoxification of the UV-induced peroxidic aldehydes. The protein is Aldehyde dehydrogenase X, mitochondrial (ALDH1B1) of Bos taurus (Bovine).